Here is a 2179-residue protein sequence, read N- to C-terminus: Probable inactive serine/threonine-protein kinase lvsG (2179 aa).

The segment at 100-167 (DHDLNKNKNN…TSISLNDLNS (68 aa)) is disordered. 2 stretches are compositionally biased toward low complexity: residues 106-121 (NKNN…NNSG) and 141-159 (LSPS…LSTS). One copy of the WD 1 repeat lies at 216 to 256 (LYERSLKTSQQQQQQQQQQFKFQPNETLSLWEYFDEINSPP). 9 disordered regions span residues 281 to 300 (LDNK…NSQS), 523 to 556 (DNDN…TVGW), 589 to 621 (DSMG…NSGK), 778 to 801 (KSLK…QPQF), 844 to 959 (NNHH…NKPS), 1033 to 1055 (AQQQ…SKQL), 1079 to 1153 (GISK…STTD), 1339 to 1362 (NHSN…KNGS), and 1785 to 1807 (TTTT…PNSL). Residues 463-801 (YHQPLENQFE…QQQTQQQPQF (339 aa)) form the BEACH domain. The span at 534–548 (NSSSSNNNNNNNNED) shows a compositional bias: low complexity. The segment covering 590 to 602 (SMGGGIGSIGSTG) has biased composition (gly residues). Low complexity-rich tracts occupy residues 783–800 (QRQQ…QQPQ), 853–943 (NSNI…GVNN), 1033–1047 (AQQQ…QQQA), and 1084–1098 (TTNA…TNSN). Residues 1021-1049 (LQQQLQQQQQQQAQQQQSQQQSQQQQANS) are a coiled coil. Positions 1064 to 1400 (ESMIKKYSNG…VNELLSSSLF (337 aa)) constitute a Protein kinase domain. Polar residues predominate over residues 1099 to 1122 (MGDSIGNNITSPPSPTSLKDSSSI). The span at 1123 to 1134 (QQQQQQQQQQQQ) shows a compositional bias: low complexity. Residues 1135-1153 (NSESTRPITPPNVSNSTTD) show a composition bias toward polar residues. 2 stretches are compositionally biased toward low complexity: residues 1339–1360 (NHSN…NNKN) and 1785–1801 (TTTT…NNNN). WD repeat units follow at residues 1864 to 1903 (EHNA…SLTT), 1906 to 1942 (QHMH…KVNV), 1945 to 1983 (EPTG…LTHE), 2007 to 2048 (SNSN…ILEQ), 2052 to 2089 (HHDS…PIIS), and 2149 to 2179 (PKQS…KICQ).

This sequence belongs to the protein kinase superfamily. Ser/Thr protein kinase family.

In Dictyostelium discoideum (Social amoeba), this protein is Probable inactive serine/threonine-protein kinase lvsG (lvsG).